The sequence spans 249 residues: Putative SAP domain-containing protein 049L (249 aa).

Composition is skewed to basic and acidic residues over residues 1–12 (MAAPKAEGEDKP), 22–38 (PKPE…KEFC), and 95–107 (KKAE…KLDE). The interval 1–110 (MAAPKAEGED…DDKKLDEATG (110 aa)) is disordered. The SAP domain occupies 119–153 (LSKLTIQTLKGMCKTRNLKISGNKAALVQRLIEAD).

In Frog virus 3 (isolate Goorha) (FV-3), this protein is Putative SAP domain-containing protein 049L.